We begin with the raw amino-acid sequence, 399 residues long: Probable 2-isopropylmalate synthase (399 aa).

A Pyruvate carboxyltransferase domain is found at 20–272 (VRIFDTTLRD…RTGVNTKLLY (253 aa)). A divalent metal cation contacts are provided by aspartate 29, histidine 210, histidine 212, and asparagine 246.

Belongs to the alpha-IPM synthase/homocitrate synthase family. As to quaternary structure, homodimer. Requires a divalent metal cation as cofactor.

The enzyme catalyses 3-methyl-2-oxobutanoate + acetyl-CoA + H2O = (2S)-2-isopropylmalate + CoA + H(+). The protein operates within amino-acid biosynthesis; L-leucine biosynthesis; L-leucine from 3-methyl-2-oxobutanoate: step 1/4. Functionally, catalyzes the condensation of the acetyl group of acetyl-CoA with 3-methyl-2-oxobutanoate (2-oxoisovalerate) to form 3-carboxy-3-hydroxy-4-methylpentanoate (2-isopropylmalate). The sequence is that of Probable 2-isopropylmalate synthase (leuA) from Ignicoccus hospitalis (strain KIN4/I / DSM 18386 / JCM 14125).